A 261-amino-acid chain; its full sequence is Acetoacetate decarboxylase 2 (261 aa).

K116 acts as the Schiff-base intermediate with acetoacetate in catalysis.

The protein belongs to the ADC family.

It catalyses the reaction acetoacetate + H(+) = acetone + CO2. Its function is as follows. Catalyzes the conversion of acetoacetate to acetone and carbon dioxide. This chain is Acetoacetate decarboxylase 2, found in Mesorhizobium japonicum (strain LMG 29417 / CECT 9101 / MAFF 303099) (Mesorhizobium loti (strain MAFF 303099)).